The following is a 517-amino-acid chain: Dermokine (517 aa).

The signal sequence occupies residues M1 to A21. Disordered regions lie at residues V51 to R83 and A123 to E364. 2 stretches are compositionally biased toward gly residues: residues G127–G145 and G167–G176. A compositionally biased stretch (polar residues) spans R197 to T206. Residues G212 to H235 show a composition bias toward low complexity. A compositionally biased stretch (gly residues) spans G236–G250. Over residues N251–S289 the composition is skewed to low complexity. Composition is skewed to gly residues over residues G308–N332 and G347–G358.

This sequence belongs to the dermokine family. Homooligomer. Seems to be able to homodimerize and homotrimerize. O-glycosylated. In terms of tissue distribution, highly expressed in stratified epithelia; such as the skin, tongue, esophagus, forestomach and vagina. Also found in lung, trachea and urinary bladder.

It localises to the secreted. In terms of biological role, may act as a soluble regulator of keratinocyte differentiation. The sequence is that of Dermokine (Dmkn) from Mus musculus (Mouse).